A 60-amino-acid chain; its full sequence is UPF0434 protein YcaR (60 aa).

It belongs to the UPF0434 family.

The polypeptide is UPF0434 protein YcaR (Escherichia fergusonii (strain ATCC 35469 / DSM 13698 / CCUG 18766 / IAM 14443 / JCM 21226 / LMG 7866 / NBRC 102419 / NCTC 12128 / CDC 0568-73)).